A 450-amino-acid polypeptide reads, in one-letter code: Tubulin alpha chain (450 aa).

A GTP-binding site is contributed by Gln11. Lys40 carries the post-translational modification N6-acetyllysine. The GTP site is built by Glu71, Ser140, Gly144, Thr145, Thr179, Asn206, and Asn228. Glu71 is a binding site for Mg(2+). The active site involves Glu254.

The protein belongs to the tubulin family. In terms of assembly, dimer of alpha and beta chains. A typical microtubule is a hollow water-filled tube with an outer diameter of 25 nm and an inner diameter of 15 nM. Alpha-beta heterodimers associate head-to-tail to form protofilaments running lengthwise along the microtubule wall with the beta-tubulin subunit facing the microtubule plus end conferring a structural polarity. Microtubules usually have 13 protofilaments but different protofilament numbers can be found in some organisms and specialized cells. Requires Mg(2+) as cofactor. Post-translationally, acetylation of alpha chains at Lys-40 stabilizes microtubules and affects affinity and processivity of microtubule motors. This modification has a role in multiple cellular functions, ranging from cell motility, cell cycle progression or cell differentiation to intracellular trafficking and signaling.

It is found in the cytoplasm. The protein localises to the cytoskeleton. It catalyses the reaction GTP + H2O = GDP + phosphate + H(+). Its function is as follows. Tubulin is the major constituent of microtubules, a cylinder consisting of laterally associated linear protofilaments composed of alpha- and beta-tubulin heterodimers. Microtubules grow by the addition of GTP-tubulin dimers to the microtubule end, where a stabilizing cap forms. Below the cap, tubulin dimers are in GDP-bound state, owing to GTPase activity of alpha-tubulin. In Tyrophagus putrescentiae (Mold mite), this protein is Tubulin alpha chain.